Consider the following 213-residue polypeptide: MHKDGVLIKGNREGINATIDMEKFASFEDMLNMLIKKLSKGKHFYKGTTLILNVNLSLIKKNDIKKLKESLLNEIELNEIIFEQLEQESNIQTKIFNGVYEGKTKFIRRTVRSGQCLNYPGNIVIIGDVNSGAEVHAAGNIIVLGSLKGSVNAGNTGNKKSIIAAFLLEPEILKIADVITISPDGLDKPRYPEIAKVKDGTIIVEPYLANKYI.

This sequence belongs to the MinC family. In terms of assembly, interacts with MinD and FtsZ.

Its function is as follows. Cell division inhibitor that blocks the formation of polar Z ring septums. Rapidly oscillates between the poles of the cell to destabilize FtsZ filaments that have formed before they mature into polar Z rings. Prevents FtsZ polymerization. This chain is Probable septum site-determining protein MinC, found in Clostridium botulinum (strain Eklund 17B / Type B).